Consider the following 351-residue polypeptide: N-acetyl-gamma-glutamyl-phosphate reductase (351 aa).

Residue Cys-154 is part of the active site.

The protein belongs to the NAGSA dehydrogenase family. Type 1 subfamily.

It localises to the cytoplasm. The catalysed reaction is N-acetyl-L-glutamate 5-semialdehyde + phosphate + NADP(+) = N-acetyl-L-glutamyl 5-phosphate + NADPH + H(+). It functions in the pathway amino-acid biosynthesis; L-arginine biosynthesis; N(2)-acetyl-L-ornithine from L-glutamate: step 3/4. Its function is as follows. Catalyzes the NADPH-dependent reduction of N-acetyl-5-glutamyl phosphate to yield N-acetyl-L-glutamate 5-semialdehyde. This is N-acetyl-gamma-glutamyl-phosphate reductase from Prochlorococcus marinus (strain MIT 9301).